A 247-amino-acid polypeptide reads, in one-letter code: Large ribosomal subunit protein uL24m (247 aa).

Residues 84 to 117 (FFRGDRIEVLVGKDKGKQGIVTQVIPERNWVIVE) enclose the KOW domain.

It belongs to the universal ribosomal protein uL24 family. In terms of assembly, component of the mitochondrial ribosome large subunit (39S) which comprises a 16S rRNA and about 50 distinct proteins.

Its subcellular location is the mitochondrion. This Drosophila melanogaster (Fruit fly) protein is Large ribosomal subunit protein uL24m (mRpL24).